Here is a 494-residue protein sequence, read N- to C-terminus: Tripartite motif-containing protein 5 (494 aa).

A2 is modified (N-acetylalanine). An RING-type zinc finger spans residues 15–59 (CPICLELLTQPLSLDCGHSFCQACLTANHKTSMPDEGERSCPVCR). At S86 the chain carries Phosphoserine. Residues 91-133 (QKVDHCARHGEKLLLFCQEDRKVICWLCERSQEHRGHHTFLTE) form a B box-type zinc finger. Zn(2+) is bound by residues C96, H99, C118, and H124. Residues 132-241 (TEEVAQEYQV…LISDLEHRLQ (110 aa)) are a coiled coil. Residues 186–199 (FEQLRHILDWVESN) form a required for interaction with GABARAP and for autophagy region. The B30.2/SPRY domain maps to 282-494 (LKVMLEVLRE…VPMTLCSPSS (213 aa)).

It belongs to the TRIM/RBCC family. In terms of assembly, can form homodimers and homotrimers. In addition to lower-order dimerization, also exhibits a higher-order multimerization and both low- and high-order multimerizations are essential for its restriction activity. Interacts with BTBD1 and BTBD2. Interacts with PSMC4, PSMC5, PSMD7 and HSPA8/HSC70. Interacts (via B30.2/SPRY domain) with HSPA1A/B. Interacts with PSMC2, MAP3K7/TAK1, TAB2 and TAB3. Interacts with SQSTM1. Interacts with TRIM6 and TRIM34. Interacts with ULK1 (phosphorylated form), GABARAP, GABARAPL1, GABARAPL2, MAP1LC3A, MAP1LC3C and BECN1. Post-translationally, degraded in a proteasome-independent fashion in the absence of viral infection but in a proteasome-dependent fashion following exposure to restriction sensitive virus. Autoubiquitinated in a RING finger- and UBE2D2-dependent manner. Monoubiquitinated by TRIM21. Deubiquitinated by Yersinia YopJ. Ubiquitination may not lead to proteasomal degradation.

The protein resides in the cytoplasm. Its subcellular location is the nucleus. The enzyme catalyses S-ubiquitinyl-[E2 ubiquitin-conjugating enzyme]-L-cysteine + [acceptor protein]-L-lysine = [E2 ubiquitin-conjugating enzyme]-L-cysteine + N(6)-ubiquitinyl-[acceptor protein]-L-lysine.. Its pathway is protein modification; protein ubiquitination. Functionally, capsid-specific restriction factor that prevents infection from non-host-adapted retroviruses. Blocks viral replication early in the life cycle, after viral entry but before reverse transcription. In addition to acting as a capsid-specific restriction factor, also acts as a pattern recognition receptor that activates innate immune signaling in response to the retroviral capsid lattice. Binding to the viral capsid triggers its E3 ubiquitin ligase activity, and in concert with the heterodimeric ubiquitin conjugating enzyme complex UBE2V1-UBE2N (also known as UBC13-UEV1A complex) generates 'Lys-63'-linked polyubiquitin chains, which in turn are catalysts in the autophosphorylation of the MAP3K7/TAK1 complex (includes TAK1, TAB2, and TAB3). Activation of the MAP3K7/TAK1 complex by autophosphorylation results in the induction and expression of NF-kappa-B and MAPK-responsive inflammatory genes, thereby leading to an innate immune response in the infected cell. Plays a role in regulating autophagy through activation of autophagy regulator BECN1 by causing its dissociation from its inhibitors BCL2 and TAB2. This chain is Tripartite motif-containing protein 5 (TRIM5), found in Symphalangus syndactylus (Siamang).